A 372-amino-acid chain; its full sequence is Hydrogenase-2 small chain (372 aa).

The tat-type signal signal peptide spans 1–37 (MTGDNTLIHSHGINRRDFMKLCAALAATMGLSSKAAA). Residues cysteine 59, cysteine 62, cysteine 157, cysteine 191, histidine 229, cysteine 232, cysteine 257, and cysteine 263 each contribute to the [4Fe-4S] cluster site. 3 residues coordinate [3Fe-4S] cluster: cysteine 272, cysteine 292, and cysteine 295.

This sequence belongs to the [NiFe]/[NiFeSe] hydrogenase small subunit family. Heterodimer of a large and a small subunit. The cofactor is [4Fe-4S] cluster. [3Fe-4S] cluster serves as cofactor. In terms of processing, predicted to be exported by the Tat system. The position of the signal peptide cleavage has not been experimentally proven.

It is found in the cell membrane. The protein localises to the periplasm. It carries out the reaction H2 + A = AH2. This is one of three E.coli hydrogenases synthesized in response to different physiological conditions. HYD2 is involved in hydrogen uptake. The polypeptide is Hydrogenase-2 small chain (hybO) (Escherichia coli O157:H7).